The following is a 186-amino-acid chain: Two-component response regulator ARR6 (186 aa).

Positions 26–153 (HVLAVDDSHV…DVKRLRDSLM (128 aa)) constitute a Response regulatory domain. Residue aspartate 86 is modified to 4-aspartylphosphate.

The protein belongs to the ARR family. Type-A subfamily. Post-translationally, two-component system major event consists of a His-to-Asp phosphorelay between a sensor histidine kinase (HK) and a response regulator (RR). In plants, the His-to-Asp phosphorelay involves an additional intermediate named Histidine-containing phosphotransfer protein (HPt). This multistep phosphorelay consists of a His-Asp-His-Asp sequential transfer of a phosphate group between first a His and an Asp of the HK protein, followed by the transfer to a conserved His of the HPt protein and finally the transfer to an Asp in the receiver domain of the RR protein. In terms of tissue distribution, predominantly expressed in roots.

The protein localises to the nucleus. Functions as a response regulator involved in His-to-Asp phosphorelay signal transduction system. Phosphorylation of the Asp residue in the receiver domain activates the ability of the protein to promote the transcription of target genes. Type-A response regulators seem to act as negative regulators of the cytokinin signaling. The chain is Two-component response regulator ARR6 (ARR6) from Arabidopsis thaliana (Mouse-ear cress).